Here is a 206-residue protein sequence, read N- to C-terminus: Large ribosomal subunit protein uL4 (206 aa).

It belongs to the universal ribosomal protein uL4 family. As to quaternary structure, part of the 50S ribosomal subunit.

One of the primary rRNA binding proteins, this protein initially binds near the 5'-end of the 23S rRNA. It is important during the early stages of 50S assembly. It makes multiple contacts with different domains of the 23S rRNA in the assembled 50S subunit and ribosome. Functionally, forms part of the polypeptide exit tunnel. The polypeptide is Large ribosomal subunit protein uL4 (Methylocella silvestris (strain DSM 15510 / CIP 108128 / LMG 27833 / NCIMB 13906 / BL2)).